The sequence spans 520 residues: Catalase easC (520 aa).

H71 is an active-site residue. Heme is bound at residue Y361.

It belongs to the catalase family. Heme serves as cofactor.

It participates in alkaloid biosynthesis; ergot alkaloid biosynthesis. Functionally, catalase; part of the gene cluster that mediates the biosynthesis of fumiclavanine C, a fungal ergot alkaloid. DmaW catalyzes the first step of ergot alkaloid biosynthesis by condensing dimethylallyl diphosphate (DMAP) and tryptophan to form 4-dimethylallyl-L-tryptophan. The second step is catalyzed by the methyltransferase easF that methylates 4-dimethylallyl-L-tryptophan in the presence of S-adenosyl-L-methionine, resulting in the formation of 4-dimethylallyl-L-abrine. The catalase easC and the FAD-dependent oxidoreductase easE then transform 4-dimethylallyl-L-abrine to chanoclavine-I which is further oxidized by EasD in the presence of NAD(+), resulting in the formation of chanoclavine-I aldehyde. EasA reduces chanoclavine-I aldehyde to dihydrochanoclavine-I aldehyde that spontaneously dehydrates to form 6,8-dimethyl-6,7-didehydroergoline. EasG then catalyzes the reduction of 6,8-dimethyl-6,7-didehydroergoline to form festuclavine. Hydrolysis of festuclavine by easM then leads to the formation of fumigaclavine B which is in turn acetylated by easN to fumigaclavine A. Finally, easL catalyzes the conversion of fumigaclavine A into fumigaclavine C by attaching a dimethylallyl moiety to C-2 of the indole nucleus. This Aspergillus fumigatus (strain ATCC MYA-4609 / CBS 101355 / FGSC A1100 / Af293) (Neosartorya fumigata) protein is Catalase easC.